The chain runs to 454 residues: N-acetyl-S-(2-succino)cysteine lyase (454 aa).

A fumarate-binding site is contributed by 106–107 (TT). His-154 (proton donor/acceptor) is an active-site residue. Arg-233 lines the fumarate pocket. Catalysis depends on Ser-277, which acts as the Proton donor/acceptor. Fumarate contacts are provided by residues Thr-278 and 283–285 (KRN).

It belongs to the lyase 1 family.

The enzyme catalyses N-acetyl-S-(2-succino)-L-cysteine = N-acetyl-L-cysteine + fumarate. Its pathway is amino-acid biosynthesis; L-cysteine biosynthesis. In terms of biological role, catalyzes the cleavage of N-acetyl-S-(2-succino)cysteine into fumarate and N-acetylcysteine. Is involved in a S-(2-succino)cysteine (2SC) degradation pathway that allows the bacterium to recover cysteine from 2SC and to detoxify 2SC that may be a toxic metabolite. Can also perform the reverse reaction in vitro, and has minor activity against 2SC and other small molecule thiols. This Dickeya dadantii (strain 3937) (Erwinia chrysanthemi (strain 3937)) protein is N-acetyl-S-(2-succino)cysteine lyase.